The chain runs to 664 residues: DNA topoisomerase 4 subunit B (664 aa).

Residues Tyr7, Asn47, Asp74, Gly114 to Ala120, and Lys341 each bind ATP. Positions Arg386–Ser418 are disordered. Over residues Glu387–Ser398 the composition is skewed to basic and acidic residues. The Toprim domain occupies Asn424–Pro538. Glu430, Asp503, and Asp505 together coordinate Mg(2+).

Belongs to the type II topoisomerase family. ParE type 2 subfamily. As to quaternary structure, heterotetramer composed of ParC and ParE. Requires Mg(2+) as cofactor. It depends on Mn(2+) as a cofactor. The cofactor is Ca(2+).

The enzyme catalyses ATP-dependent breakage, passage and rejoining of double-stranded DNA.. Functionally, topoisomerase IV is essential for chromosome segregation. It relaxes supercoiled DNA. Performs the decatenation events required during the replication of a circular DNA molecule. The chain is DNA topoisomerase 4 subunit B from Staphylococcus epidermidis (strain ATCC 35984 / DSM 28319 / BCRC 17069 / CCUG 31568 / BM 3577 / RP62A).